The chain runs to 170 residues: Co-chaperone protein HscB homolog (170 aa).

In terms of domain architecture, J spans 5-79; the sequence is DHFSLFGLPT…RARYLCEQAG (75 aa).

This sequence belongs to the HscB family. Interacts with HscA and stimulates its ATPase activity.

In terms of biological role, co-chaperone involved in the maturation of iron-sulfur cluster-containing proteins. Seems to help targeting proteins to be folded toward HscA. This Bordetella bronchiseptica (strain ATCC BAA-588 / NCTC 13252 / RB50) (Alcaligenes bronchisepticus) protein is Co-chaperone protein HscB homolog.